A 339-amino-acid polypeptide reads, in one-letter code: Ketol-acid reductoisomerase (NADP(+)) (339 aa).

One can recognise a KARI N-terminal Rossmann domain in the interval 1–182 (MRVYYDRDAD…GGGRAGIIET (182 aa)). NADP(+) is bound by residues 24–27 (YGSQ), arginine 48, serine 51, serine 53, and 83–86 (DELQ). Histidine 108 is an active-site residue. Glycine 134 is a binding site for NADP(+). Residues 183–328 (TFREECETDL…AKLRDMMPWI (146 aa)) form the KARI C-terminal knotted domain. Mg(2+) contacts are provided by aspartate 191, glutamate 195, glutamate 227, and glutamate 231. Serine 252 contributes to the substrate binding site.

Belongs to the ketol-acid reductoisomerase family. Requires Mg(2+) as cofactor.

The catalysed reaction is (2R)-2,3-dihydroxy-3-methylbutanoate + NADP(+) = (2S)-2-acetolactate + NADPH + H(+). The enzyme catalyses (2R,3R)-2,3-dihydroxy-3-methylpentanoate + NADP(+) = (S)-2-ethyl-2-hydroxy-3-oxobutanoate + NADPH + H(+). The protein operates within amino-acid biosynthesis; L-isoleucine biosynthesis; L-isoleucine from 2-oxobutanoate: step 2/4. It functions in the pathway amino-acid biosynthesis; L-valine biosynthesis; L-valine from pyruvate: step 2/4. Its function is as follows. Involved in the biosynthesis of branched-chain amino acids (BCAA). Catalyzes an alkyl-migration followed by a ketol-acid reduction of (S)-2-acetolactate (S2AL) to yield (R)-2,3-dihydroxy-isovalerate. In the isomerase reaction, S2AL is rearranged via a Mg-dependent methyl migration to produce 3-hydroxy-3-methyl-2-ketobutyrate (HMKB). In the reductase reaction, this 2-ketoacid undergoes a metal-dependent reduction by NADPH to yield (R)-2,3-dihydroxy-isovalerate. The chain is Ketol-acid reductoisomerase (NADP(+)) from Rhodopseudomonas palustris (strain ATCC BAA-98 / CGA009).